The chain runs to 634 residues: Dynein axonemal assembly factor 1 (634 aa).

A disordered region spans residues 1-80 (MHPEVSEPPV…SRDDREDRGP (80 aa)). Over residues 22–42 (AGDHGDAGPGIRKEEISETKE) the composition is skewed to basic and acidic residues. Positions 48 to 62 (CTTSCPSQQQPSGDN) are enriched in polar residues. Basic and acidic residues predominate over residues 70 to 80 (HSRDDREDRGP). 6 LRR repeats span residues 101–123 (ALND…EEYT), 124–145 (GLRC…QAQS), 146–167 (ELRC…EPLQ), 168–189 (KLDA…SCLP), 190–211 (VLNT…EHLR), and 215–236 (RLCV…SVLE). In terms of domain architecture, LRRCT spans 249–288 (NPVTKHIPNYRRTVTVRLKHLTYLDDRPVFPKDRACAEAW). Basic and acidic residues predominate over residues 326–336 (EERKKARDRGE). Positions 326–358 (EERKKARDRGETPLPDSEGSIPTSPEAEEKQPM) are disordered. Serine 349 is subject to Phosphoserine. Threonine 462 is subject to Phosphothreonine. 2 positions are modified to phosphoserine: serine 465 and serine 488. Disordered regions lie at residues 481 to 505 (ISSL…ATPT) and 559 to 634 (ELND…FGLD).

The protein belongs to the DNAAF1 family.

The protein localises to the cell projection. The protein resides in the cilium. Cilium-specific protein required for the stability of the ciliary architecture. Plays a role in cytoplasmic preassembly of dynein arms. Involved in regulation of microtubule-based cilia and actin-based brush border microvilli. In Mus musculus (Mouse), this protein is Dynein axonemal assembly factor 1 (Dnaaf1).